Reading from the N-terminus, the 172-residue chain is DNA-directed RNA polymerase II subunit rpb7 (172 aa).

Belongs to the eukaryotic RPB7/RPC8 RNA polymerase subunit family. Component of the RNA polymerase II (Pol II) complex consisting of 12 subunits. RPB4 and RPB7 form a subcomplex that protrudes from the 10-subunit Pol II core complex.

The protein resides in the nucleus. Its function is as follows. DNA-dependent RNA polymerase catalyzes the transcription of DNA into RNA using the four ribonucleoside triphosphates as substrates. Component of RNA polymerase II which synthesizes mRNA precursors and many functional non-coding RNAs. Pol II is the central component of the basal RNA polymerase II transcription machinery. It is composed of mobile elements that move relative to each other. RPB7 is part of a subcomplex with RPB4 that binds to a pocket formed by RPB1, RPB2 and RPB6 at the base of the clamp element. The RPB4-RPB7 subcomplex seems to lock the clamp via RPB7 in the closed conformation thus preventing double-stranded DNA to enter the active site cleft. The RPB4-RPB7 subcomplex binds single-stranded DNA and RNA. This is DNA-directed RNA polymerase II subunit rpb7 (polr2g) from Dictyostelium discoideum (Social amoeba).